A 126-amino-acid polypeptide reads, in one-letter code: Anti-adapter protein IraD (126 aa).

Belongs to the GpW/Gp25 family. IraD subfamily. In terms of assembly, interacts with RssB.

The protein localises to the cytoplasm. Inhibits RpoS proteolysis by regulating RssB activity, thereby increasing the stability of the sigma stress factor RpoS during oxidative stress. Its effect on RpoS stability is due to its interaction with RssB, which probably blocks the interaction of RssB with RpoS, and the consequent delivery of the RssB-RpoS complex to the ClpXP protein degradation pathway. This Salmonella arizonae (strain ATCC BAA-731 / CDC346-86 / RSK2980) protein is Anti-adapter protein IraD.